The primary structure comprises 106 residues: Iron-sulfur cluster assembly protein CyaY (106 aa).

Belongs to the frataxin family.

Functionally, involved in iron-sulfur (Fe-S) cluster assembly. May act as a regulator of Fe-S biogenesis. This chain is Iron-sulfur cluster assembly protein CyaY, found in Citrobacter koseri (strain ATCC BAA-895 / CDC 4225-83 / SGSC4696).